Consider the following 155-residue polypeptide: Secreted RxLR effector protein 38 (155 aa).

Positions 1–17 (MHLIYIVMAATATTLHA) are cleaved as a signal peptide. The short motif at 49-64 (RFLRGAYEDVHREEER) is the RxLR-dEER element.

Belongs to the RxLR effector family.

It is found in the secreted. Its subcellular location is the host nucleus. The protein resides in the host cytoplasm. In terms of biological role, secreted effector that completely suppresses the host cell death induced by cell death-inducing proteins. In Plasmopara viticola (Downy mildew of grapevine), this protein is Secreted RxLR effector protein 38.